The primary structure comprises 370 residues: 3-isopropylmalate dehydrogenase (370 aa).

Residues Arg-99, Arg-109, Arg-137, and Asp-227 each coordinate substrate. Residues Asp-227, Asp-251, and Asp-255 each coordinate Mg(2+). Position 290–302 (290–302 (GSAPDIAGQDKAN)) interacts with NAD(+).

This sequence belongs to the isocitrate and isopropylmalate dehydrogenases family. LeuB type 1 subfamily. Homodimer. The cofactor is Mg(2+). Requires Mn(2+) as cofactor.

Its subcellular location is the cytoplasm. It carries out the reaction (2R,3S)-3-isopropylmalate + NAD(+) = 4-methyl-2-oxopentanoate + CO2 + NADH. It functions in the pathway amino-acid biosynthesis; L-leucine biosynthesis; L-leucine from 3-methyl-2-oxobutanoate: step 3/4. Functionally, catalyzes the oxidation of 3-carboxy-2-hydroxy-4-methylpentanoate (3-isopropylmalate) to 3-carboxy-4-methyl-2-oxopentanoate. The product decarboxylates to 4-methyl-2 oxopentanoate. The chain is 3-isopropylmalate dehydrogenase from Rhodospirillum rubrum (strain ATCC 11170 / ATH 1.1.1 / DSM 467 / LMG 4362 / NCIMB 8255 / S1).